The chain runs to 208 residues: Uridine kinase (208 aa).

ATP is bound at residue 11 to 18 (GGTGSGKS).

Belongs to the uridine kinase family.

Its subcellular location is the cytoplasm. It catalyses the reaction uridine + ATP = UMP + ADP + H(+). It carries out the reaction cytidine + ATP = CMP + ADP + H(+). Its pathway is pyrimidine metabolism; CTP biosynthesis via salvage pathway; CTP from cytidine: step 1/3. It functions in the pathway pyrimidine metabolism; UMP biosynthesis via salvage pathway; UMP from uridine: step 1/1. The polypeptide is Uridine kinase (Clostridium perfringens (strain ATCC 13124 / DSM 756 / JCM 1290 / NCIMB 6125 / NCTC 8237 / Type A)).